Here is a 160-residue protein sequence, read N- to C-terminus: 2-C-methyl-D-erythritol 2,4-cyclodiphosphate synthase (160 aa).

Residues Asp-12 and His-14 each contribute to the a divalent metal cation site. 4-CDP-2-C-methyl-D-erythritol 2-phosphate contacts are provided by residues 12-14 and 38-39; these read DVH and HS. His-46 is a binding site for a divalent metal cation. Residues 60–62, 65–69, 136–139, Phe-143, and Arg-146 each bind 4-CDP-2-C-methyl-D-erythritol 2-phosphate; these read DIG, FPDTD, and TTTE.

Belongs to the IspF family. As to quaternary structure, homotrimer. The cofactor is a divalent metal cation.

It catalyses the reaction 4-CDP-2-C-methyl-D-erythritol 2-phosphate = 2-C-methyl-D-erythritol 2,4-cyclic diphosphate + CMP. It functions in the pathway isoprenoid biosynthesis; isopentenyl diphosphate biosynthesis via DXP pathway; isopentenyl diphosphate from 1-deoxy-D-xylulose 5-phosphate: step 4/6. In terms of biological role, involved in the biosynthesis of isopentenyl diphosphate (IPP) and dimethylallyl diphosphate (DMAPP), two major building blocks of isoprenoid compounds. Catalyzes the conversion of 4-diphosphocytidyl-2-C-methyl-D-erythritol 2-phosphate (CDP-ME2P) to 2-C-methyl-D-erythritol 2,4-cyclodiphosphate (ME-CPP) with a corresponding release of cytidine 5-monophosphate (CMP). The protein is 2-C-methyl-D-erythritol 2,4-cyclodiphosphate synthase of Acinetobacter baumannii (strain SDF).